Here is a 461-residue protein sequence, read N- to C-terminus: tRNA-2-methylthio-N(6)-dimethylallyladenosine synthase (461 aa).

The MTTase N-terminal domain maps to 18–134 (KHIYIQTLGC…LPDFISRIEK (117 aa)). 6 residues coordinate [4Fe-4S] cluster: cysteine 27, cysteine 63, cysteine 97, cysteine 172, cysteine 176, and cysteine 179. Positions 158–388 (CNGQVSSFVT…QALQEQHTLE (231 aa)) constitute a Radical SAM core domain. The TRAM domain maps to 391–454 (KAMEGKQEDV…LHSLRGEMLC (64 aa)).

This sequence belongs to the methylthiotransferase family. MiaB subfamily. As to quaternary structure, monomer. [4Fe-4S] cluster is required as a cofactor.

It is found in the cytoplasm. The catalysed reaction is N(6)-dimethylallyladenosine(37) in tRNA + (sulfur carrier)-SH + AH2 + 2 S-adenosyl-L-methionine = 2-methylsulfanyl-N(6)-dimethylallyladenosine(37) in tRNA + (sulfur carrier)-H + 5'-deoxyadenosine + L-methionine + A + S-adenosyl-L-homocysteine + 2 H(+). Catalyzes the methylthiolation of N6-(dimethylallyl)adenosine (i(6)A), leading to the formation of 2-methylthio-N6-(dimethylallyl)adenosine (ms(2)i(6)A) at position 37 in tRNAs that read codons beginning with uridine. The protein is tRNA-2-methylthio-N(6)-dimethylallyladenosine synthase of Syntrophus aciditrophicus (strain SB).